Consider the following 539-residue polypeptide: Cytochrome P450 monooxygenase tenB (539 aa).

A helical membrane pass occupies residues Leu13–Trp33. The segment at Pro439–Ala460 is disordered. Cys481 contributes to the heme binding site.

Belongs to the cytochrome P450 family. Heme serves as cofactor.

It is found in the membrane. It functions in the pathway secondary metabolite biosynthesis. In terms of biological role, cytochrome P450 monooxygenase; part of the gene cluster that mediates the biosynthesis of tenellin-type 2-pyridones, iron-chelating compounds involved in iron stress tolerance, competition with the natural competitor fungus Metarhizium robertsii and insect hosts infection. TenB catalyzes the selective N-hydroxylation of the 2-pyridone nitrogen of yield tellinin and 15-hydroxytellenin (15-HT), respectively. The pathway begins with the assembly of the polyketide-amino acid backbone by the hybrid PKS-NRPS tenS with the help of the enoyl reductase tenC. These enzymes catalyze the synthesis of the pyrrolidine-2-dione intermediates pretellinin A, 11-hydropretellenin A, 12-hydropretellenin A, 13-hydropretellenin A, 14-hydropretellenin A, 12-oxopretellenin A and prototellinin D. The cytochrome P450 monooxygenase tenA then catalyzes an oxidative ring expansion of pretenellin A and 14-hydropretellenin A to form the 2-pyridone core, leading to pretenellin B and pyridovericin, respectively. The cytochrome P450 monooxygenase tenB is then required for the selective N-hydroxylation of the 2-pyridone nitrogen of yield tellinin and 15-hydroxytellenin (15-HT), respectively. The UDP-glucosyltransferase GT1 and the methyltransferase MT1, located outside the tenS gene cluster, contribute to the stepwise glycosylation and methylation of 15-HT to obtain the glycoside pyridovericin-N-O-(4-O-methyl-beta-D-glucopyranoside) (PMGP). Additional related compounds such as 1-O-methyl-15-HT, (8Z)-1-O-methyl-15-HT, and O-methyltenellin A are also produced but the enzymes involved in their biosynthesis have still to be determined. This chain is Cytochrome P450 monooxygenase tenB, found in Beauveria bassiana (White muscardine disease fungus).